Reading from the N-terminus, the 421-residue chain is UDP-N-acetylglucosamine 1-carboxyvinyltransferase (421 aa).

22-23 (KN) lines the phosphoenolpyruvate pocket. UDP-N-acetyl-alpha-D-glucosamine is bound at residue Arg94. Residue Cys118 is the Proton donor of the active site. 2-(S-cysteinyl)pyruvic acid O-phosphothioketal is present on Cys118. Residues 163-166 (KVSV), Asp308, and Ile330 contribute to the UDP-N-acetyl-alpha-D-glucosamine site.

The protein belongs to the EPSP synthase family. MurA subfamily.

It is found in the cytoplasm. It catalyses the reaction phosphoenolpyruvate + UDP-N-acetyl-alpha-D-glucosamine = UDP-N-acetyl-3-O-(1-carboxyvinyl)-alpha-D-glucosamine + phosphate. It functions in the pathway cell wall biogenesis; peptidoglycan biosynthesis. In terms of biological role, cell wall formation. Adds enolpyruvyl to UDP-N-acetylglucosamine. The sequence is that of UDP-N-acetylglucosamine 1-carboxyvinyltransferase from Orientia tsutsugamushi (strain Boryong) (Rickettsia tsutsugamushi).